Here is a 511-residue protein sequence, read N- to C-terminus: Sodium/proline symporter 2 (511 aa).

The next 13 membrane-spanning stretches (helical) occupy residues 16 to 36 (WQTY…GYYG), 54 to 74 (IGPY…WMIM), 85 to 105 (LSAM…YFVV), 139 to 159 (IISG…GFVS), 175 to 195 (GLLM…YLAV), 204 to 224 (VIML…LNGI), 246 to 266 (VLGI…PHII), 286 to 306 (ISWM…GIAF), 327 to 347 (ILFH…AIMS), 381 to 401 (FLMV…WIAW), 410 to 430 (LVGN…IFSL), 438 to 458 (TGAL…IVWI), and 467 to 487 (LFGM…TYFV).

The protein belongs to the sodium:solute symporter (SSF) (TC 2.A.21) family.

It is found in the cell membrane. The catalysed reaction is L-proline(in) + Na(+)(in) = L-proline(out) + Na(+)(out). In terms of biological role, catalyzes the sodium-dependent uptake of extracellular L-proline. The protein is Sodium/proline symporter 2 (putP2) of Staphylococcus saprophyticus subsp. saprophyticus (strain ATCC 15305 / DSM 20229 / NCIMB 8711 / NCTC 7292 / S-41).